Here is a 367-residue protein sequence, read N- to C-terminus: Aurora kinase (367 aa).

The segment at 30–49 is disordered; the sequence is TTATNGAPPQARVQPGKGYR. The Protein kinase domain occupies 109–360; it reads FEIGKVLGKG…LKEVKKHPWI (252 aa). ATP-binding positions include 115-123 and Lys138; that span reads LGKGKFGRV. Asp232 (proton acceptor) is an active-site residue.

Belongs to the protein kinase superfamily. Ser/Thr protein kinase family. Aurora subfamily.

The protein resides in the nucleus. It localises to the cytoplasm. Its subcellular location is the cytoskeleton. It is found in the spindle. The protein localises to the chromosome. The protein resides in the centromere. It localises to the kinetochore. The catalysed reaction is L-seryl-[protein] + ATP = O-phospho-L-seryl-[protein] + ADP + H(+). It carries out the reaction L-threonyl-[protein] + ATP = O-phospho-L-threonyl-[protein] + ADP + H(+). Its function is as follows. Component of the chromosomal passenger complex (CPC), a complex that acts as a key regulator of chromosome segregation and cytokinesis. Has a role in error-correction of aberrent kinetochore-microtubule attachments to ensure that sister kinetochores become bioriented and connect to opposite poles by promoting spindle assembly checkpoint signaling. In Eremothecium gossypii (strain ATCC 10895 / CBS 109.51 / FGSC 9923 / NRRL Y-1056) (Yeast), this protein is Aurora kinase (IPL1).